A 309-amino-acid chain; its full sequence is Formimidoylglutamase (309 aa).

Mn(2+) is bound by residues H120, D145, H147, D149, D236, and D238.

Belongs to the arginase family. Mn(2+) serves as cofactor.

The enzyme catalyses N-formimidoyl-L-glutamate + H2O = formamide + L-glutamate. The protein operates within amino-acid degradation; L-histidine degradation into L-glutamate; L-glutamate from N-formimidoyl-L-glutamate (hydrolase route): step 1/1. Its function is as follows. Catalyzes the conversion of N-formimidoyl-L-glutamate to L-glutamate and formamide. The protein is Formimidoylglutamase of Chromobacterium violaceum (strain ATCC 12472 / DSM 30191 / JCM 1249 / CCUG 213 / NBRC 12614 / NCIMB 9131 / NCTC 9757 / MK).